A 561-amino-acid chain; its full sequence is DNA ligase B (561 aa).

Catalysis depends on lysine 125, which acts as the N6-AMP-lysine intermediate.

Belongs to the NAD-dependent DNA ligase family. LigB subfamily.

The catalysed reaction is NAD(+) + (deoxyribonucleotide)n-3'-hydroxyl + 5'-phospho-(deoxyribonucleotide)m = (deoxyribonucleotide)n+m + AMP + beta-nicotinamide D-nucleotide.. In terms of biological role, catalyzes the formation of phosphodiester linkages between 5'-phosphoryl and 3'-hydroxyl groups in double-stranded DNA using NAD as a coenzyme and as the energy source for the reaction. This chain is DNA ligase B, found in Escherichia coli O127:H6 (strain E2348/69 / EPEC).